The primary structure comprises 645 residues: 1,4-alpha-glucan branching enzyme GlgB (645 aa).

Asp-309 functions as the Nucleophile in the catalytic mechanism. Glu-352 (proton donor) is an active-site residue. A disordered region spans residues 619-645; that stretch reads VKTRKGSKKQDGSKTKVRSNVTSRGKR. A compositionally biased stretch (polar residues) spans 636–645; the sequence is RSNVTSRGKR.

This sequence belongs to the glycosyl hydrolase 13 family. GlgB subfamily. Monomer.

It catalyses the reaction Transfers a segment of a (1-&gt;4)-alpha-D-glucan chain to a primary hydroxy group in a similar glucan chain.. The protein operates within glycan biosynthesis; glycogen biosynthesis. Catalyzes the formation of the alpha-1,6-glucosidic linkages in glycogen by scission of a 1,4-alpha-linked oligosaccharide from growing alpha-1,4-glucan chains and the subsequent attachment of the oligosaccharide to the alpha-1,6 position. The polypeptide is 1,4-alpha-glucan branching enzyme GlgB (Bacillus anthracis (strain CDC 684 / NRRL 3495)).